The primary structure comprises 236 residues: Hydroxyacylglutathione hydrolase (236 aa).

Zn(2+) is bound by residues histidine 52, histidine 54, aspartate 56, histidine 57, histidine 108, aspartate 125, and histidine 163.

The protein belongs to the metallo-beta-lactamase superfamily. Glyoxalase II family. In terms of assembly, monomer. It depends on Zn(2+) as a cofactor.

It carries out the reaction an S-(2-hydroxyacyl)glutathione + H2O = a 2-hydroxy carboxylate + glutathione + H(+). Its pathway is secondary metabolite metabolism; methylglyoxal degradation; (R)-lactate from methylglyoxal: step 2/2. Its function is as follows. Thiolesterase that catalyzes the hydrolysis of S-D-lactoyl-glutathione to form glutathione and D-lactic acid. The sequence is that of Hydroxyacylglutathione hydrolase from Mannheimia succiniciproducens (strain KCTC 0769BP / MBEL55E).